Reading from the N-terminus, the 743-residue chain is NAD(P)H-quinone oxidoreductase subunit 5, chloroplastic (743 aa).

The next 16 helical transmembrane spans lie at 9 to 29, 40 to 60, 89 to 109, 125 to 145, 147 to 167, 185 to 205, 224 to 244, 258 to 278, 284 to 304, 327 to 347, 354 to 374, 396 to 416, 425 to 445, 551 to 571, 607 to 627, and 723 to 743; these read WIIP…LLLF, WAFQ…NLSI, IDPL…MVLI, FAYM…SNLI, IYIF…FWFT, GDFG…SFEF, VFVT…SAQF, TPIS…FLVA, FIVI…TVFF, LGYM…FHLI, ALLF…VGYC, NSFL…CFWS, WLYS…TAFY, LFPI…GIPF, VFSV…YKPV, and YLFF…FLNL.

The protein belongs to the complex I subunit 5 family. In terms of assembly, NDH is composed of at least 16 different subunits, 5 of which are encoded in the nucleus.

It is found in the plastid. It localises to the chloroplast thylakoid membrane. The catalysed reaction is a plastoquinone + NADH + (n+1) H(+)(in) = a plastoquinol + NAD(+) + n H(+)(out). The enzyme catalyses a plastoquinone + NADPH + (n+1) H(+)(in) = a plastoquinol + NADP(+) + n H(+)(out). Its function is as follows. NDH shuttles electrons from NAD(P)H:plastoquinone, via FMN and iron-sulfur (Fe-S) centers, to quinones in the photosynthetic chain and possibly in a chloroplast respiratory chain. The immediate electron acceptor for the enzyme in this species is believed to be plastoquinone. Couples the redox reaction to proton translocation, and thus conserves the redox energy in a proton gradient. The polypeptide is NAD(P)H-quinone oxidoreductase subunit 5, chloroplastic (ndhF) (Helianthus annuus (Common sunflower)).